The sequence spans 216 residues: Urease accessory protein UreG (216 aa).

25–32 lines the GTP pocket; sequence GPVGSGKT.

The protein belongs to the SIMIBI class G3E GTPase family. UreG subfamily. As to quaternary structure, homodimer. UreD, UreF and UreG form a complex that acts as a GTP-hydrolysis-dependent molecular chaperone, activating the urease apoprotein by helping to assemble the nickel containing metallocenter of UreC. The UreE protein probably delivers the nickel.

It localises to the cytoplasm. Facilitates the functional incorporation of the urease nickel metallocenter. This process requires GTP hydrolysis, probably effectuated by UreG. The protein is Urease accessory protein UreG of Burkholderia thailandensis (strain ATCC 700388 / DSM 13276 / CCUG 48851 / CIP 106301 / E264).